Reading from the N-terminus, the 621-residue chain is 1-deoxy-D-xylulose-5-phosphate synthase (621 aa).

Thiamine diphosphate is bound by residues His-80 and 121–123 (GHS). Residue Asp-152 participates in Mg(2+) binding. Residues 153–154 (GA), Asn-181, Tyr-288, and Glu-370 each bind thiamine diphosphate. Asn-181 contacts Mg(2+).

It belongs to the transketolase family. DXPS subfamily. As to quaternary structure, homodimer. Mg(2+) is required as a cofactor. Thiamine diphosphate serves as cofactor.

It carries out the reaction D-glyceraldehyde 3-phosphate + pyruvate + H(+) = 1-deoxy-D-xylulose 5-phosphate + CO2. The protein operates within metabolic intermediate biosynthesis; 1-deoxy-D-xylulose 5-phosphate biosynthesis; 1-deoxy-D-xylulose 5-phosphate from D-glyceraldehyde 3-phosphate and pyruvate: step 1/1. Functionally, catalyzes the acyloin condensation reaction between C atoms 2 and 3 of pyruvate and glyceraldehyde 3-phosphate to yield 1-deoxy-D-xylulose-5-phosphate (DXP). The sequence is that of 1-deoxy-D-xylulose-5-phosphate synthase from Serratia proteamaculans (strain 568).